The primary structure comprises 335 residues: MGRVKLEIKRIENTTNRQVTFSKRRNGLIKKAYELSILCDIDIALIMFSPSDRLSLFSGKTRIEDVFSRFINLPKQERESALYFPDQNRRPDIQNKECLLRILQQLKTENDIALQVTNPAAINSDVEELEHEVCRLQQQLQMAEEELRRYEPDPIRFTTMEEYEVSEKQLLDTLTHVVQRRDHLMSNHLSSYEASTMQPNIGGPFVNDVVEGWLPENGTNQTHLFDASAHSNQLRELSSAMYEPLLQGSSSSSNQNNMSECHVTNHNGEMFPEWAQAYSSSALFASMQQQHEGVGPSIEEMMPAQQSDIPGVTAETQVDHEVSDYETKVPQLSSQ.

Residues M1–T61 enclose the MADS-box domain. Residues S124 to E151 adopt a coiled-coil conformation. The tract at residues M302–Q335 is disordered. Over residues Q317–T327 the composition is skewed to basic and acidic residues.

Forms heterodimers with AGL30 and AGL65. In terms of tissue distribution, expressed in pollen.

It localises to the nucleus. Probable transcription factor that forms heterodimers with the MADS-box proteins AGL30 and AGL65 and is involved in the regulation of pollen maturation at the late stages of pollen development and pollen tube growth. This Arabidopsis thaliana (Mouse-ear cress) protein is Agamous-like MADS-box protein AGL104.